The following is a 288-amino-acid chain: Proteasome subunit beta (288 aa).

A propeptide spans 1–57 (MTAGDPMRLHPGHALSSFTEHLRALAPELLGPNRFAALDGATGSSGGTGAKDIAPHG) (removed in mature form; by autocatalysis). The active-site Nucleophile is Thr-58.

It belongs to the peptidase T1B family. The 20S proteasome core is composed of 14 alpha and 14 beta subunits that assemble into four stacked heptameric rings, resulting in a barrel-shaped structure. The two inner rings, each composed of seven catalytic beta subunits, are sandwiched by two outer rings, each composed of seven alpha subunits. The catalytic chamber with the active sites is on the inside of the barrel. Has a gated structure, the ends of the cylinder being occluded by the N-termini of the alpha-subunits. Is capped by the proteasome-associated ATPase, ARC.

It is found in the cytoplasm. The enzyme catalyses Cleavage of peptide bonds with very broad specificity.. The protein operates within protein degradation; proteasomal Pup-dependent pathway. With respect to regulation, the formation of the proteasomal ATPase ARC-20S proteasome complex, likely via the docking of the C-termini of ARC into the intersubunit pockets in the alpha-rings, may trigger opening of the gate for substrate entry. Interconversion between the open-gate and close-gate conformations leads to a dynamic regulation of the 20S proteasome proteolysis activity. Its function is as follows. Component of the proteasome core, a large protease complex with broad specificity involved in protein degradation. This chain is Proteasome subunit beta, found in Nocardia farcinica (strain IFM 10152).